We begin with the raw amino-acid sequence, 452 residues long: Trigger factor (452 aa).

Residues Asp-170–Pro-256 form the PPIase FKBP-type domain.

It belongs to the FKBP-type PPIase family. Tig subfamily.

The protein resides in the cytoplasm. It carries out the reaction [protein]-peptidylproline (omega=180) = [protein]-peptidylproline (omega=0). In terms of biological role, involved in protein export. Acts as a chaperone by maintaining the newly synthesized protein in an open conformation. Functions as a peptidyl-prolyl cis-trans isomerase. The sequence is that of Trigger factor from Borreliella afzelii (strain PKo) (Borrelia afzelii).